Reading from the N-terminus, the 408-residue chain is Gustatory receptor 10a (408 aa).

At 1-20 the chain is on the cytoplasmic side; the sequence is MTSPDERKSFWERHEFKFYR. The helical transmembrane segment at 21-38 threads the bilayer; it reads YGHVYALIYGQVVIDYVP. Residues 39–48 are Extracellular-facing; it reads QRALKRGVKV. Residues 49-69 form a helical membrane-spanning segment; it reads LLIAYGHLFSMLLIVVLPGYF. Residues 70–86 lie on the Cytoplasmic side of the membrane; the sequence is CYHFRTLTDTLDRRLQL. Residues 87–107 form a helical membrane-spanning segment; that stretch reads LFYVSFTNTAIKYATVIVTYV. Residues 108 to 144 are Extracellular-facing; it reads ANTVHFEAINQRCTMQRTHLEFEFKNAPQEPKRPFEF. Residues 145 to 165 form a helical membrane-spanning segment; sequence FMYFKFCLINLMMMIQVCGIF. Topologically, residues 166–270 are cytoplasmic; that stretch reads AQYGEVGKGS…RESFRMHQFQ (105 aa). A helical membrane pass occupies residues 271–291; that stretch reads LIGLMLSTLINNLTNFYTLFH. The Extracellular portion of the chain corresponds to 292-304; sequence MLAKQSLEEVSYP. A helical transmembrane segment spans residues 305 to 325; sequence VVVGSVYATGFYIDTYIVALI. At 326–381 the chain is on the cytoplasmic side; sequence NEHIKLELEAVALTMRRFAEPREMDERLTREIEHLSLELLNYQPPMLCGLLHLDRR. Residues 382–402 form a helical membrane-spanning segment; that stretch reads LVYLIAVTAFSYFITLVQFDL. The Extracellular portion of the chain corresponds to 403–408; it reads YLRKKS.

This sequence belongs to the insect chemoreceptor superfamily. Gustatory receptor (GR) family. Gr10a subfamily. As to expression, expressed in the medial aspect of the third antennal segment, and in neurons of the terminal external chemosensory organ of larvae.

It is found in the cell membrane. In terms of biological role, probable gustatory receptor which mediates acceptance or avoidance behavior, depending on its substrates. In Drosophila melanogaster (Fruit fly), this protein is Gustatory receptor 10a (Gr10a).